A 290-amino-acid polypeptide reads, in one-letter code: Sodium/potassium-transporting ATPase subunit beta-2 (290 aa).

Topologically, residues 1–39 (MVIQKEKKSCGQVVEEWKEFVWNPRTHQFMGRTGTSWAF) are cytoplasmic. Residues 40-67 (ILLFYLVFYGFLTAMFTLTMWVMLQTVS) form a helical; Signal-anchor for type II membrane protein membrane-spanning segment. At 68-290 (DHTPKYQDRL…VAFKLRINKT (223 aa)) the chain is on the extracellular side. N-linked (GlcNAc...) asparagine glycans are attached at residues N96 and N118. C129 and C150 are joined by a disulfide. The N-linked (GlcNAc...) asparagine glycan is linked to N153. C160 and C177 are disulfide-bonded. N-linked (GlcNAc...) asparagine glycosylation is found at N193, N197, and N238. The segment at 193-289 (NQSMNVTCVG…RVAFKLRINK (97 aa)) is immunoglobulin-like. Cysteines 200 and 261 form a disulfide.

Belongs to the X(+)/potassium ATPases subunit beta family. In terms of assembly, the sodium/potassium-transporting ATPase is composed of a catalytic alpha subunit, an auxiliary non-catalytic beta subunit and an additional regulatory subunit. Interacts with BSG.

It is found in the cell membrane. Its function is as follows. This is the non-catalytic component of the active enzyme, which catalyzes the hydrolysis of ATP coupled with the exchange of Na(+) and K(+) ions across the plasma membrane. The exact function of the beta-2 subunit is not known. Functionally, mediates cell adhesion of neurons and astrocytes, and promotes neurite outgrowth. This is Sodium/potassium-transporting ATPase subunit beta-2 (ATP1B2) from Bos taurus (Bovine).